Here is a 116-residue protein sequence, read N- to C-terminus: Putative iron-sulfur cluster insertion protein ErpA (116 aa).

Residues C44, C108, and C110 each contribute to the iron-sulfur cluster site.

This sequence belongs to the HesB/IscA family. Homodimer. Requires iron-sulfur cluster as cofactor.

Functionally, required for insertion of 4Fe-4S clusters. This is Putative iron-sulfur cluster insertion protein ErpA from Azoarcus sp. (strain BH72).